The sequence spans 359 residues: NADH-quinone oxidoreductase subunit H (359 aa).

8 helical membrane passes run 19–39, 94–114, 127–147, 166–186, 202–222, 266–286, 301–321, and 337–357; these read IGWF…FIAL, FLFV…FAVL, VGLF…LAAG, IVSY…LAGT, FMHW…IYFI, MFMV…SPLP, VWGA…QMWL, and CWKV…IWVI.

The protein belongs to the complex I subunit 1 family. In terms of assembly, NDH-1 is composed of 14 different subunits. Subunits NuoA, H, J, K, L, M, N constitute the membrane sector of the complex.

It localises to the cell inner membrane. The enzyme catalyses a quinone + NADH + 5 H(+)(in) = a quinol + NAD(+) + 4 H(+)(out). NDH-1 shuttles electrons from NADH, via FMN and iron-sulfur (Fe-S) centers, to quinones in the respiratory chain. The immediate electron acceptor for the enzyme in this species is believed to be ubiquinone. Couples the redox reaction to proton translocation (for every two electrons transferred, four hydrogen ions are translocated across the cytoplasmic membrane), and thus conserves the redox energy in a proton gradient. This subunit may bind ubiquinone. This is NADH-quinone oxidoreductase subunit H from Chlorobaculum parvum (strain DSM 263 / NCIMB 8327) (Chlorobium vibrioforme subsp. thiosulfatophilum).